A 611-amino-acid polypeptide reads, in one-letter code: UvrABC system protein C (611 aa).

A GIY-YIG domain is found at 14 to 91 (TSPGCYIHKD…IKENKPKYNI (78 aa)). The UVR domain maps to 196-231 (DQIIEDLRGKMAGAAQTMEFEKAAEYRDLIQSIGTL).

This sequence belongs to the UvrC family. Interacts with UvrB in an incision complex.

It is found in the cytoplasm. Functionally, the UvrABC repair system catalyzes the recognition and processing of DNA lesions. UvrC both incises the 5' and 3' sides of the lesion. The N-terminal half is responsible for the 3' incision and the C-terminal half is responsible for the 5' incision. In Streptococcus gordonii (strain Challis / ATCC 35105 / BCRC 15272 / CH1 / DL1 / V288), this protein is UvrABC system protein C.